Consider the following 825-residue polypeptide: MSSSPVNVKKLKVSELKEELKKRRLSDKGLKAELMERLQAALDDEEAGGRPAMEPGNGSLDLGGDSAGRSGAGLEQEAAAGGDEEEEEEEEEEEGISALDGDQMELGEENGAAGAADSGPMEEEEAASEDENGDDQGFQEGEDELGDEEEGAGDENGHGEQQPQPPATQQQQPQQQRGAAKEAAGKSSGPTSLFAVTVAPPGARQGQQQAGGKKKAEGGGGGGRPGAPAAGDGKTEQKGGDKKRGVKRPREDHGRGYFEYIEENKYSRAKSPQPPVEEEDEHFDDTVVCLDTYNCDLHFKISRDRLSASSLTMESFAFLWAGGRASYGVSKGKVCFEMKVTEKIPVRHLYTKDIDIHEVRIGWSLTTSGMLLGEEEFSYGYSLKGIKTCNCETEDYGEKFDENDVITCFANFESDEVELSYAKNGQDLGVAFKISKEVLAGRPLFPHVLCHNCAVEFNFGQKEKPYFPIPEEYTFIQNVPLEDRVRGPKGPEEKKDCEVVMMIGLPGAGKTTWVTKHAAENPGKYNILGTNTIMDKMMVAGFKKQMADTGKLNTLLQRAPQCLGKFIEIAARKKRNFILDQTNVSAAAQRRKMCLFAGFQRKAVVVCPKDEDYKQRTQKKAEVEGKDLPEHAVLKMKGNFTLPEVAECFDEITYVELQKEEAQKLLEQYKEESKKALPPEKKQNTGSKKSNKNKSGKNQFNRGGGHRGRGGFNMRGGNFRGGAPGNRGGYNRRGNMPQRGGGGGGSGGIGYPYPRAPVFPGRGSYSNRGNYNRGGMPNRGNYNQNFRGRGNNRGYKNQSQGYNQWQQGQFWGQKPWSQHYHQGYY.

Ser2 is subject to N-acetylserine; partial. Phosphoserine is present on Ser4. The SAP domain occupies 8–42 (VKKLKVSELKEELKKRRLSDKGLKAELMERLQAAL). Lys17 and Lys21 each carry N6-acetyllysine. Residues 41–281 (ALDDEEAGGR…PQPPVEEEDE (241 aa)) form a disordered region. Ser59 carries the post-translational modification Phosphoserine; by PLK1. Ser66 is subject to Phosphoserine. A compositionally biased stretch (low complexity) spans 72-81 (AGLEQEAAAG). Acidic residues-rich tracts occupy residues 82–95 (GDEEEEEEEEEEEG), 120–134 (PMEEEEAASEDENGD), and 140–153 (EGEDELGDEEEGAG). Residues 159-178 (GEQQPQPPATQQQQPQQQRG) are compositionally biased toward low complexity. Residue Lys186 is modified to N6-acetyllysine. Ser187 is modified (ADP-ribosylserine). Positions 199-211 (APPGARQGQQQAG) are enriched in low complexity. Position 215 is an N6-acetyllysine (Lys215). Residues 233 to 266 (GKTEQKGGDKKRGVKRPREDHGRGYFEYIEENKY) are compositionally biased toward basic and acidic residues. Arg255 is subject to Citrulline. Lys265 is modified (N6-acetyllysine; alternate). Lys265 is covalently cross-linked (Glycyl lysine isopeptide (Lys-Gly) (interchain with G-Cter in SUMO1); alternate). Lys265 participates in a covalent cross-link: Glycyl lysine isopeptide (Lys-Gly) (interchain with G-Cter in SUMO2); alternate. Tyr266 carries the phosphotyrosine modification. Ser267 and Ser271 each carry phosphoserine. One can recognise a B30.2/SPRY domain in the interval 267-464 (SRAKSPQPPV…VEFNFGQKEK (198 aa)). Thr286 is modified (phosphothreonine). Lys352 bears the N6-acetyllysine mark. An ATPase domain region spans residues 488 to 672 (PKGPEEKKDC…QKLLEQYKEE (185 aa)). Lys495 is covalently cross-linked (Glycyl lysine isopeptide (Lys-Gly) (interchain with G-Cter in SUMO2)). 504-511 (GLPGAGKT) is an ATP binding site. Lys516 and Lys524 each carry N6-acetyllysine; alternate. Residues Lys516 and Lys524 each participate in a glycyl lysine isopeptide (Lys-Gly) (interchain with G-Cter in SUMO2); alternate cross-link. At Thr532 the chain carries Phosphothreonine. Lys536 is covalently cross-linked (Glycyl lysine isopeptide (Lys-Gly) (interchain with G-Cter in SUMO2)). Lys551 carries the N6-acetyllysine modification. Lys565 is modified (N6-acetyllysine; alternate). A Glycyl lysine isopeptide (Lys-Gly) (interchain with G-Cter in SUMO2); alternate cross-link involves residue Lys565. A Glycyl lysine isopeptide (Lys-Gly) (interchain with G-Cter in SUMO2) cross-link involves residue Lys574. Thr582 is modified (phosphothreonine). Glycyl lysine isopeptide (Lys-Gly) (interchain with G-Cter in SUMO2) cross-links involve residues Lys609 and Lys626. An actin-binding region spans residues 611–626 (EDYKQRTQKKAEVEGK). Position 635 is an N6-acetyllysine; alternate (Lys635). A Glycyl lysine isopeptide (Lys-Gly) (interchain with G-Cter in SUMO2); alternate cross-link involves residue Lys635. Glycyl lysine isopeptide (Lys-Gly) (interchain with G-Cter in SUMO2) cross-links involve residues Lys664 and Lys670. Over residues 671-683 (EESKKALPPEKKQ) the composition is skewed to basic and acidic residues. Positions 671–749 (EESKKALPPE…GGGGGGSGGI (79 aa)) are disordered. Arg702 carries the post-translational modification Omega-N-methylarginine. Over residues 710–728 (GGFNMRGGNFRGGAPGNRG) the composition is skewed to gly residues. The interval 714–739 (MRGGNFRGGAPGNRGGYNRRGNMPQR) is RNA-binding RGG-box. Arg715, Arg720, and Arg727 each carry asymmetric dimethylarginine. An asymmetric dimethylarginine; alternate mark is found at Arg733 and Arg739. 2 positions are modified to omega-N-methylarginine; alternate: Arg733 and Arg739. Arg739 is modified (dimethylated arginine; in A2780 ovarian carcinoma cell line). Over residues 739–749 (RGGGGGGSGGI) the composition is skewed to gly residues. Residues Arg755 and Arg762 each carry the asymmetric dimethylarginine modification. The disordered stretch occupies residues 769-799 (GNYNRGGMPNRGNYNQNFRGRGNNRGYKNQS). Residues 778-799 (NRGNYNQNFRGRGNNRGYKNQS) are compositionally biased toward low complexity. Lys814 bears the N6-acetyllysine; alternate mark. A Glycyl lysine isopeptide (Lys-Gly) (interchain with G-Cter in SUMO2); alternate cross-link involves residue Lys814.

Oligomer (via ATPase domain and RNA-binding RGG-box region); oligomerization occurs upon ATP-binding in a chromatin-associated RNAs (caRNAs)- and transcription-dependent manner and is required for chromatin decompaction. ATP hydrolysis is required to cycle from an oligomeric to monomeric state to compact chromatin. Component of the coding region determinant (CRD)-mediated complex, composed of DHX9, HNRNPU, IGF2BP1, SYNCRIP and YBX1. Identified in the spliceosome C complex. Identified in a IGF2BP1-dependent mRNP granule complex containing untranslated mRNAs. Associates with heterogeneous nuclear ribonucleoprotein (hnRNP) particles. Associates (via middle region) with the C-terminal domain (CTD) RNA polymerase II (Pol II) holoenzyme; this association occurs in a RNA-independent manner. Associates (via middle region) with the core-TFIIH basal transcription factor complex; this association inhibits the CTD phosphorylation of RNA polymerase II holoenzyme by down-regulating TFIIH kinase activity. Associates with the telomerase holoenzyme complex. Associates with spindle microtubules (MTs) in a TPX2-dependent manner. Interacts (via C-terminus) with actin; this interaction is direct and mediates association with the phosphorylated CTD of RNA polymerase II and is disrupted in presence of the long non-coding H19 RNA. Interacts with AURKA. Interacts (via C-terminus) with CBX5; this interaction is, at least in part, RNA-dependent. Interacts with CR2. Interacts with CRY1. Interacts (via C-terminus) with EP300; this interaction enhances DNA-binding to nuclear scaffold/matrix attachment region (S/MAR) elements. Interacts with ERBB4. Interacts with GEMIN5. Interacts with IGF2BP1. Interacts with IGF2BP2 and IGF2BP3. Interacts with NCL; this interaction occurs during mitosis. Interacts (via C-terminus) with NR3C1 (via C-terminus). Interacts with PLK1; this interaction induces phosphorylation of HNRNPU at Ser-59 in mitosis. Interacts with POU3F4. Interacts with SMARCA4; this interaction occurs in embryonic stem cells and stimulates global Pol II-mediated transcription. Interacts (via C-terminus) with TOP2A; this interaction protects the topoisomerase TOP2A from degradation and positively regulates the relaxation of supercoiled DNA by TOP2A in a RNA-dependent manner. Interacts with TPX2; this interaction recruits HNRNPU to spindle microtubules (MTs). Interacts with UBQLN2. Interacts (via RNA-binding RGG-box region) with ZBTB7B; the interaction facilitates the recruitment of long non-coding RNA Blnc1 by ZBTB7B. Interacts with ERCC6. In terms of assembly, (Microbial infection) Interacts with HIV-1 protein Rev. Post-translationally, cleaved at Asp-100 by CASP3 during T-cell apoptosis, resulting in a loss of DNA- and chromatin-binding activities. Extensively phosphorylated. Phosphorylated on Ser-59 by PLK1 and dephosphorylated by protein phosphatase 2A (PP2A) in mitosis. In terms of processing, arg-739 is dimethylated, probably to asymmetric dimethylarginine. Arg-733 is dimethylated, probably to asymmetric dimethylarginine. Post-translationally, citrullinated by PADI4. As to expression, widely expressed.

Its subcellular location is the nucleus. It is found in the nucleus matrix. It localises to the chromosome. The protein resides in the nucleus speckle. The protein localises to the cytoplasm. Its subcellular location is the cytoskeleton. It is found in the microtubule organizing center. It localises to the centrosome. The protein resides in the centromere. The protein localises to the kinetochore. Its subcellular location is the spindle. It is found in the spindle pole. It localises to the midbody. The protein resides in the cell surface. The protein localises to the cytoplasmic granule. DNA- and RNA-binding protein involved in several cellular processes such as nuclear chromatin organization, telomere-length regulation, transcription, mRNA alternative splicing and stability, Xist-mediated transcriptional silencing and mitotic cell progression. Plays a role in the regulation of interphase large-scale gene-rich chromatin organization through chromatin-associated RNAs (caRNAs) in a transcription-dependent manner, and thereby maintains genomic stability. Required for the localization of the long non-coding Xist RNA on the inactive chromosome X (Xi) and the subsequent initiation and maintenance of X-linked transcriptional gene silencing during X-inactivation. Plays a role as a RNA polymerase II (Pol II) holoenzyme transcription regulator. Promotes transcription initiation by direct association with the core-TFIIH basal transcription factor complex for the assembly of a functional pre-initiation complex with Pol II in a actin-dependent manner. Blocks Pol II transcription elongation activity by inhibiting the C-terminal domain (CTD) phosphorylation of Pol II and dissociates from Pol II pre-initiation complex prior to productive transcription elongation. Positively regulates CBX5-induced transcriptional gene silencing and retention of CBX5 in the nucleus. Negatively regulates glucocorticoid-mediated transcriptional activation. Key regulator of transcription initiation and elongation in embryonic stem cells upon leukemia inhibitory factor (LIF) signaling. Involved in the long non-coding RNA H19-mediated Pol II transcriptional repression. Participates in the circadian regulation of the core clock component BMAL1 transcription. Plays a role in the regulation of telomere length. Plays a role as a global pre-mRNA alternative splicing modulator by regulating U2 small nuclear ribonucleoprotein (snRNP) biogenesis. Plays a role in mRNA stability. Component of the CRD-mediated complex that promotes MYC mRNA stabilization. Enhances the expression of specific genes, such as tumor necrosis factor TNFA, by regulating mRNA stability, possibly through binding to the 3'-untranslated region (UTR). Plays a role in mitotic cell cycle regulation. Involved in the formation of stable mitotic spindle microtubules (MTs) attachment to kinetochore, spindle organization and chromosome congression. Phosphorylation at Ser-59 by PLK1 is required for chromosome alignement and segregation and progression through mitosis. Also contributes to the targeting of AURKA to mitotic spindle MTs. Binds to double- and single-stranded DNA and RNA, poly(A), poly(C) and poly(G) oligoribonucleotides. Binds to chromatin-associated RNAs (caRNAs). Associates with chromatin to scaffold/matrix attachment region (S/MAR) elements in a chromatin-associated RNAs (caRNAs)-dependent manner. Binds to the Xist RNA. Binds the long non-coding H19 RNA. Binds to SMN1/2 pre-mRNAs at G/U-rich regions. Binds to small nuclear RNAs (snRNAs). Binds to the 3'-UTR of TNFA mRNA. Binds (via RNA-binding RGG-box region) to the long non-coding Xist RNA; this binding is direct and bridges the Xist RNA and the inactive chromosome X (Xi). Also negatively regulates embryonic stem cell differentiation upon LIF signaling. Required for embryonic development. Binds to brown fat long non-coding RNA 1 (Blnc1); facilitates the recruitment of Blnc1 by ZBTB7B required to drive brown and beige fat development and thermogenesis. Its function is as follows. (Microbial infection) Negatively regulates immunodeficiency virus type 1 (HIV-1) replication by preventing the accumulation of viral mRNA transcripts in the cytoplasm. The protein is Heterogeneous nuclear ribonucleoprotein U of Homo sapiens (Human).